The primary structure comprises 58 residues: Ribulose bisphosphate carboxylase large chain (58 aa).

The propeptide occupies 1-2 (MS). The residue at position 3 (P3) is an N-acetylproline. Position 14 is an N6,N6,N6-trimethyllysine (K14).

It belongs to the RuBisCO large chain family. Type I subfamily. Heterohexadecamer of 8 large chains and 8 small chains.

It is found in the plastid. It localises to the chloroplast. The enzyme catalyses 2 (2R)-3-phosphoglycerate + 2 H(+) = D-ribulose 1,5-bisphosphate + CO2 + H2O. The catalysed reaction is D-ribulose 1,5-bisphosphate + O2 = 2-phosphoglycolate + (2R)-3-phosphoglycerate + 2 H(+). Functionally, ruBisCO catalyzes two reactions: the carboxylation of D-ribulose 1,5-bisphosphate, the primary event in carbon dioxide fixation, as well as the oxidative fragmentation of the pentose substrate in the photorespiration process. Both reactions occur simultaneously and in competition at the same active site. The chain is Ribulose bisphosphate carboxylase large chain (rbcL) from Euonymus maackii (Maack's spindle tree).